A 286-amino-acid chain; its full sequence is 4-hydroxybenzoate octaprenyltransferase (286 aa).

9 consecutive transmembrane segments (helical) span residues 22–42 (IGTL…SAGV), 45–65 (FSLL…GCVI), 90–110 (LTAV…FVLV), 113–133 (LNQF…IYPF), 142–162 (QVVL…AVVG), 169–189 (WLLF…YAMV), 212–232 (LYIA…GWLE), 236–256 (VSYY…QWLI), and 265–285 (FRAF…IMLA).

This sequence belongs to the UbiA prenyltransferase family. It depends on Mg(2+) as a cofactor.

Its subcellular location is the cell inner membrane. The catalysed reaction is all-trans-octaprenyl diphosphate + 4-hydroxybenzoate = 4-hydroxy-3-(all-trans-octaprenyl)benzoate + diphosphate. The protein operates within cofactor biosynthesis; ubiquinone biosynthesis. Functionally, catalyzes the prenylation of para-hydroxybenzoate (PHB) with an all-trans polyprenyl group. Mediates the second step in the final reaction sequence of ubiquinone-8 (UQ-8) biosynthesis, which is the condensation of the polyisoprenoid side chain with PHB, generating the first membrane-bound Q intermediate 3-octaprenyl-4-hydroxybenzoate. This chain is 4-hydroxybenzoate octaprenyltransferase, found in Tolumonas auensis (strain DSM 9187 / NBRC 110442 / TA 4).